A 345-amino-acid polypeptide reads, in one-letter code: Leucine-rich repeat-containing protein 69 (345 aa).

LRR repeat units lie at residues 13 to 34, 36 to 58, 59 to 80, 82 to 103, 106 to 127, 129 to 151, 152 to 173, 175 to 196, 198 to 219, and 220 to 241; these read KAKT…VGCL, SLTE…SALC, RLRV…IKYL, CLER…ALDG, NLLF…IYKL, SLET…CFLQ, NLQE…LSYL, NLKE…ICKL, KLKI…MHRV, and PLTE…FARQ.

The protein belongs to the LRRC69 family.

The chain is Leucine-rich repeat-containing protein 69 (lrrc69) from Xenopus laevis (African clawed frog).